The sequence spans 186 residues: UPF0301 protein Mmc1_0726 (186 aa).

This sequence belongs to the UPF0301 (AlgH) family.

The polypeptide is UPF0301 protein Mmc1_0726 (Magnetococcus marinus (strain ATCC BAA-1437 / JCM 17883 / MC-1)).